A 222-amino-acid chain; its full sequence is Cytochrome b6-f complex iron-sulfur subunit, chloroplastic (222 aa).

A chloroplast-targeting transit peptide spans 1–49 (MASTALSTASNPTQLCRTRASSLCKPVKGLGFGRERIPRNITCMAGSIS). Residues 66 to 86 (LLGAISLPTFGMLVPYGSFLV) form a helical membrane-spanning segment. A Rieske domain is found at 109–205 (VEDWLKTHGP…ADVDDGKVVF (97 aa)). [2Fe-2S] cluster-binding residues include C151, H153, C169, and H172. Cysteines 156 and 171 form a disulfide.

It belongs to the Rieske iron-sulfur protein family. The 4 large subunits of the cytochrome b6-f complex are cytochrome b6, subunit IV (17 kDa polypeptide, petD), cytochrome f and the Rieske protein, while the 4 small subunits are petG, petL, petM and petN. The complex functions as a dimer. [2Fe-2S] cluster is required as a cofactor.

The protein localises to the plastid. It is found in the chloroplast thylakoid membrane. It carries out the reaction 2 oxidized [plastocyanin] + a plastoquinol + 2 H(+)(in) = 2 reduced [plastocyanin] + a plastoquinone + 4 H(+)(out). Component of the cytochrome b6-f complex, which mediates electron transfer between photosystem II (PSII) and photosystem I (PSI), cyclic electron flow around PSI, and state transitions. This is Cytochrome b6-f complex iron-sulfur subunit, chloroplastic (petC) from Triticum aestivum (Wheat).